The primary structure comprises 426 residues: 4-hydroxy-3-methylbut-2-en-1-yl diphosphate synthase (flavodoxin) (426 aa).

Cysteine 310, cysteine 313, cysteine 356, and glutamate 363 together coordinate [4Fe-4S] cluster.

It belongs to the IspG family. [4Fe-4S] cluster serves as cofactor.

It catalyses the reaction (2E)-4-hydroxy-3-methylbut-2-enyl diphosphate + oxidized [flavodoxin] + H2O + 2 H(+) = 2-C-methyl-D-erythritol 2,4-cyclic diphosphate + reduced [flavodoxin]. The protein operates within isoprenoid biosynthesis; isopentenyl diphosphate biosynthesis via DXP pathway; isopentenyl diphosphate from 1-deoxy-D-xylulose 5-phosphate: step 5/6. Functionally, converts 2C-methyl-D-erythritol 2,4-cyclodiphosphate (ME-2,4cPP) into 1-hydroxy-2-methyl-2-(E)-butenyl 4-diphosphate. This chain is 4-hydroxy-3-methylbut-2-en-1-yl diphosphate synthase (flavodoxin), found in Rhodopseudomonas palustris (strain BisA53).